We begin with the raw amino-acid sequence, 812 residues long: Ribonucleoside-diphosphate reductase large subunit (812 aa).

An ATP-cone domain is found at 12–103 (LYVIKRDGRQ…VSNLHKETKK (92 aa)). Residues 16 to 17 (KR), 22 to 28 (EEVHFDK), T64, and D68 each bind ATP. S213 and S228 together coordinate GDP. A disulfide bond links C229 and C455. Residues 237–239 (DSI), K254, R267, and 274–275 (CG) each bind dTTP. Residue N438 participates in GDP binding. N438 functions as the Proton acceptor in the catalytic mechanism. C440 functions as the Cysteine radical intermediate in the catalytic mechanism. GDP is bound by residues E442 and 615–618 (TAST). The active-site Proton acceptor is E442. A Phosphothreonine modification is found at T778. At S782 the chain carries Phosphoserine. Residue Y786 is modified to Phosphotyrosine.

Belongs to the ribonucleoside diphosphate reductase large chain family. As to quaternary structure, heterodimer of a large and a small subunit.

The enzyme catalyses a 2'-deoxyribonucleoside 5'-diphosphate + [thioredoxin]-disulfide + H2O = a ribonucleoside 5'-diphosphate + [thioredoxin]-dithiol. With respect to regulation, under complex allosteric control mediated by deoxynucleoside triphosphates and ATP binding to separate specificity and activation sites on the M1 subunit. The type of nucleotide bound at the specificity site determines substrate preference. It seems probable that ATP makes the enzyme reduce CDP and UDP, dGTP favors ADP reduction and dTTP favors GDP reduction. Stimulated by ATP and inhibited by dATP binding to the activity site. In terms of biological role, provides the precursors necessary for DNA synthesis. Catalyzes the biosynthesis of deoxyribonucleotides from the corresponding ribonucleotides. In Drosophila melanogaster (Fruit fly), this protein is Ribonucleoside-diphosphate reductase large subunit (RnrL).